Reading from the N-terminus, the 129-residue chain is Prefoldin subunit 6 (129 aa).

A2 bears the N-acetylalanine mark. The residue at position 21 (K21) is an N6-acetyllysine. The residue at position 66 (K66) is an N6-acetyllysine; alternate. K66 participates in a covalent cross-link: Glycyl lysine isopeptide (Lys-Gly) (interchain with G-Cter in SUMO1); alternate. A Glycyl lysine isopeptide (Lys-Gly) (interchain with G-Cter in SUMO2); alternate cross-link involves residue K66.

The protein belongs to the prefoldin subunit beta family. As to quaternary structure, heterohexamer of two PFD-alpha type and four PFD-beta type subunits. Component of the PAQosome complex which is responsible for the biogenesis of several protein complexes and which consists of R2TP complex members RUVBL1, RUVBL2, RPAP3 and PIH1D1, URI complex members PFDN2, PFDN6, PDRG1, UXT and URI1 as well as ASDURF, POLR2E and DNAAF10/WDR92.

Its function is as follows. Binds specifically to cytosolic chaperonin (c-CPN) and transfers target proteins to it. Binds to nascent polypeptide chain and promotes folding in an environment in which there are many competing pathways for nonnative proteins. The chain is Prefoldin subunit 6 (PFDN6) from Homo sapiens (Human).